A 208-amino-acid chain; its full sequence is Protein-L-isoaspartate O-methyltransferase (208 aa).

Serine 59 is a catalytic residue.

It belongs to the methyltransferase superfamily. L-isoaspartyl/D-aspartyl protein methyltransferase family.

The protein localises to the cytoplasm. The catalysed reaction is [protein]-L-isoaspartate + S-adenosyl-L-methionine = [protein]-L-isoaspartate alpha-methyl ester + S-adenosyl-L-homocysteine. Its function is as follows. Catalyzes the methyl esterification of L-isoaspartyl residues in peptides and proteins that result from spontaneous decomposition of normal L-aspartyl and L-asparaginyl residues. It plays a role in the repair and/or degradation of damaged proteins. The protein is Protein-L-isoaspartate O-methyltransferase of Yersinia pseudotuberculosis serotype O:1b (strain IP 31758).